The primary structure comprises 545 residues: Cryptochrome-1 (545 aa).

The region spanning 3-138 (VNNILWFRHG…KCVEKVSHTL (136 aa)) is the Photolyase/cryptochrome alpha/beta domain. FAD contacts are provided by residues Arg-236, Ser-264, Ser-266, Gln-307, His-374, 406-408 (DAD), Cys-412, and Asn-415.

The protein belongs to the DNA photolyase class-1 family. Interacts with tim and per; promoted by light conditions. Requires FAD as cofactor.

Its subcellular location is the cytoplasm. The protein resides in the perinuclear region. It is found in the nucleus. Its function is as follows. Blue light-dependent regulator that is the input of the circadian feedback loop. Has no photolyase activity for cyclobutane pyrimidine dimers or 6-4 photoproducts. Regulation of expression by light suggests a role in photoreception for locomotor activity rhythms. Functions, together with per, as a transcriptional repressor required for the oscillation of peripheral circadian clocks and for the correct specification of clock cells. Genes directly activated by the transcription factors Clock (Clk) and cycle (cyc) are repressed by cry. This is Cryptochrome-1 from Aedes aegypti (Yellowfever mosquito).